A 296-amino-acid chain; its full sequence is Ribosomal RNA small subunit methyltransferase A (296 aa).

Residues Asn30, Leu32, Gly57, Glu78, Asp103, and Asn128 each coordinate S-adenosyl-L-methionine.

It belongs to the class I-like SAM-binding methyltransferase superfamily. rRNA adenine N(6)-methyltransferase family. RsmA subfamily.

It localises to the cytoplasm. It carries out the reaction adenosine(1518)/adenosine(1519) in 16S rRNA + 4 S-adenosyl-L-methionine = N(6)-dimethyladenosine(1518)/N(6)-dimethyladenosine(1519) in 16S rRNA + 4 S-adenosyl-L-homocysteine + 4 H(+). Specifically dimethylates two adjacent adenosines (A1518 and A1519) in the loop of a conserved hairpin near the 3'-end of 16S rRNA in the 30S particle. May play a critical role in biogenesis of 30S subunits. The sequence is that of Ribosomal RNA small subunit methyltransferase A from Staphylococcus carnosus (strain TM300).